A 259-amino-acid chain; its full sequence is Protoheme IX farnesyltransferase (259 aa).

The next 8 membrane-spanning stretches (helical) occupy residues 15–35 (LICL…NGVL), 61–81 (ATVA…TFLP), 83–103 (LTTA…TLWF), 109–129 (WGVV…ASAV), 137–157 (PLIL…ALAL), 182–202 (VCIF…WFTG), 208–228 (FAIE…LYLV), and 236–256 (AFQA…IDIC).

This sequence belongs to the UbiA prenyltransferase family. Protoheme IX farnesyltransferase subfamily.

It is found in the cell inner membrane. The catalysed reaction is heme b + (2E,6E)-farnesyl diphosphate + H2O = Fe(II)-heme o + diphosphate. It participates in porphyrin-containing compound metabolism; heme O biosynthesis; heme O from protoheme: step 1/1. Its function is as follows. Converts heme B (protoheme IX) to heme O by substitution of the vinyl group on carbon 2 of heme B porphyrin ring with a hydroxyethyl farnesyl side group. The sequence is that of Protoheme IX farnesyltransferase from Geotalea uraniireducens (strain Rf4) (Geobacter uraniireducens).